Here is a 371-residue protein sequence, read N- to C-terminus: Alginate lyase (371 aa).

The signal sequence occupies residues 1 to 28; it reads MRRPMTLFKRISSPALLALALFGGAAHA. Residues 67-68, 140-141, and Tyr-258 contribute to the substrate site; these read SK and HT.

This sequence belongs to the polysaccharide lyase 5 family.

It is found in the periplasm. The catalysed reaction is Eliminative cleavage of alginate to give oligosaccharides with 4-deoxy-alpha-L-erythro-hex-4-enuronosyl groups at their non-reducing ends and beta-D-mannuronate at their reducing end.. Functionally, catalyzes the depolymerization of alginate by cleaving the beta-1,4 glycosidic bond between two adjacent sugar residues via a beta-elimination mechanism. May serve to degrade mislocalized alginate that is trapped in the periplasmic space. This Pseudomonas putida (strain ATCC 47054 / DSM 6125 / CFBP 8728 / NCIMB 11950 / KT2440) protein is Alginate lyase.